Reading from the N-terminus, the 374-residue chain is Pre-B-cell leukemia transcription factor 4 (374 aa).

The region spanning 14-209 is the PBC domain; that stretch reads PRRLDTSDVL…VMTLRSRLLD (196 aa). Residues 21–100 form a PBC-A region; the sequence is DVLQQIMAIT…EGVCRPEKRG (80 aa). Positions 103–209 are PBC-B; it reads GAVARAGTAT…VMTLRSRLLD (107 aa). The homeobox; TALE-type DNA-binding region spans 210–272; the sequence is ARRKRRNFSK…NKRIRYKKNM (63 aa). The tract at residues 333-374 is disordered; sequence QPPPGGGCLQSQAQGSWQGATPQPATASPAGDPGSINSSTSN. The span at 341–358 shows a compositional bias: polar residues; that stretch reads LQSQAQGSWQGATPQPAT.

The protein belongs to the TALE/PBX homeobox family.

It localises to the nucleus. In Homo sapiens (Human), this protein is Pre-B-cell leukemia transcription factor 4 (PBX4).